Here is a 146-residue protein sequence, read N- to C-terminus: Hemoglobin subunit beta (146 aa).

The Globin domain occupies 2–146; the sequence is QWTAEEKQLI…VAHALARKYH (145 aa). Residues histidine 63 and histidine 92 each coordinate heme b.

This sequence belongs to the globin family. In terms of assembly, heterotetramer of two alpha chains and two beta chains. Red blood cells.

Involved in oxygen transport from the lung to the various peripheral tissues. This chain is Hemoglobin subunit beta (HBB), found in Rhea americana (Greater rhea).